The sequence spans 321 residues: D-alanine--D-alanine ligase (321 aa).

The region spanning 121-315 (RSWFLTNNIN…FVNLIEEILK (195 aa)) is the ATP-grasp domain. 148–199 (IKRPYVIKPFTQGSSIGVEVIFEEDDFNFANYDFPYGDEVIIEKYIKGRELQ) is an ATP binding site. E268, E282, and N284 together coordinate Mg(2+).

It belongs to the D-alanine--D-alanine ligase family. It depends on Mg(2+) as a cofactor. Mn(2+) serves as cofactor.

Its subcellular location is the cytoplasm. The catalysed reaction is 2 D-alanine + ATP = D-alanyl-D-alanine + ADP + phosphate + H(+). It participates in cell wall biogenesis; peptidoglycan biosynthesis. Cell wall formation. The polypeptide is D-alanine--D-alanine ligase (Rickettsia bellii (strain RML369-C)).